The chain runs to 400 residues: Serine/threonine-protein kinase AFC3 (400 aa).

The disordered stretch occupies residues 1–29; that stretch reads MIANGFESMDKERVRKRPRMTWDEAPAEP. The 326-residue stretch at 71 to 396 folds into the Protein kinase domain; that stretch reads YKILSKMGEG…ANEALDHPFF (326 aa). Residues 77-85 and Lys100 each bind ATP; that span reads MGEGTFGRV. Asp196 functions as the Proton acceptor in the catalytic mechanism.

The protein belongs to the protein kinase superfamily. CMGC Ser/Thr protein kinase family. Lammer subfamily.

The enzyme catalyses L-seryl-[protein] + ATP = O-phospho-L-seryl-[protein] + ADP + H(+). The catalysed reaction is L-threonyl-[protein] + ATP = O-phospho-L-threonyl-[protein] + ADP + H(+). It carries out the reaction L-tyrosyl-[protein] + ATP = O-phospho-L-tyrosyl-[protein] + ADP + H(+). The polypeptide is Serine/threonine-protein kinase AFC3 (AFC3) (Arabidopsis thaliana (Mouse-ear cress)).